Here is a 61-residue protein sequence, read N- to C-terminus: Small ribosomal subunit protein uS14 (61 aa).

Positions 24, 27, 40, and 43 each coordinate Zn(2+).

The protein belongs to the universal ribosomal protein uS14 family. Zinc-binding uS14 subfamily. As to quaternary structure, part of the 30S ribosomal subunit. Contacts proteins S3 and S10. It depends on Zn(2+) as a cofactor.

Its function is as follows. Binds 16S rRNA, required for the assembly of 30S particles and may also be responsible for determining the conformation of the 16S rRNA at the A site. This chain is Small ribosomal subunit protein uS14, found in Symbiobacterium thermophilum (strain DSM 24528 / JCM 14929 / IAM 14863 / T).